The chain runs to 222 residues: 3-dehydroquinate dehydratase (222 aa).

3-dehydroquinate-binding positions include 32 to 34 (ELR) and Arg-64. His-117 acts as the Proton donor/acceptor in catalysis. Lys-143 serves as the catalytic Schiff-base intermediate with substrate. Arg-181 is a 3-dehydroquinate binding site.

The protein belongs to the type-I 3-dehydroquinase family. As to quaternary structure, homodimer.

The catalysed reaction is 3-dehydroquinate = 3-dehydroshikimate + H2O. The protein operates within metabolic intermediate biosynthesis; chorismate biosynthesis; chorismate from D-erythrose 4-phosphate and phosphoenolpyruvate: step 3/7. Involved in the third step of the chorismate pathway, which leads to the biosynthesis of aromatic amino acids. Catalyzes the cis-dehydration of 3-dehydroquinate (DHQ) and introduces the first double bond of the aromatic ring to yield 3-dehydroshikimate. In Aeropyrum pernix (strain ATCC 700893 / DSM 11879 / JCM 9820 / NBRC 100138 / K1), this protein is 3-dehydroquinate dehydratase.